A 359-amino-acid polypeptide reads, in one-letter code: Protein FLX-like 2 (359 aa).

Basic residues predominate over residues 1–16 (MESKGRIHPSHHHMRR). Residues 1–27 (MESKGRIHPSHHHMRRPLPGPGGCIAH) form a disordered region. Positions 83-236 (HGSLRQELAA…EKLQAQLMNN (154 aa)) form a coiled coil. Residues 303–359 (TQPGYFPQRPGYNFPRGPPGSYDPTTRLPTGPYGAPFPPGPSNNTPYAGTHGNPSRR) form a disordered region.

The protein belongs to the FLX family. As to quaternary structure, interacts with FRI.

Its function is as follows. Has no transcriptional activation activity. This is Protein FLX-like 2 (FLXL2) from Arabidopsis thaliana (Mouse-ear cress).